Here is a 306-residue protein sequence, read N- to C-terminus: Heterogeneous nuclear ribonucleoproteins C1/C2 (306 aa).

The residue at position 2 (A2) is an N-acetylalanine. Residues K8, K50, K89, and K94 each participate in a glycyl lysine isopeptide (Lys-Gly) (interchain with G-Cter in SUMO2) cross-link. Residues 16-87 (SRVFIGNLNT…QVLDINLAAE (72 aa)) enclose the RRM domain. Phosphoserine is present on residues S107 and V108. T109 is modified (phosphothreonine). Residues S113, S115, and S121 each carry the phosphoserine modification. 2 disordered regions span residues 139–190 (YPAR…KLKG) and 221–306 (QSKQ…EDDS). Residues 155-161 (PSKRQRV) carry the Nuclear localization signal motif. S162 and S166 each carry phosphoserine. The span at 175 to 185 (SKSGQRGSSKS) shows a compositional bias: low complexity. K176 is modified (N6-acetyllysine; alternate). Residue K176 forms a Glycyl lysine isopeptide (Lys-Gly) (interchain with G-Cter in SUMO2); alternate linkage. Positions 190–238 (GDDLQAIKKELTQIKQKVDSLLENLEKIEKEQSKQAVEMKNDKSEEEQS) form a coiled coil. Residues 221–232 (QSKQAVEMKNDK) show a composition bias toward basic and acidic residues. Residues K223 and K229 each participate in a glycyl lysine isopeptide (Lys-Gly) (interchain with G-Cter in SUMO2) cross-link. A Glycyl lysine isopeptide (Lys-Gly) (interchain with G-Cter in SUMO2); alternate cross-link involves residue K232. A Glycyl lysine isopeptide (Lys-Gly) (interchain with G-Cter in SUMO1); alternate cross-link involves residue K232. Residues S233, S238, S239, and S241 each carry the phosphoserine modification. The segment covering 242–253 (VKKDETNVKMES) has biased composition (basic and acidic residues). Residues K243 and K244 each participate in a glycyl lysine isopeptide (Lys-Gly) (interchain with G-Cter in SUMO2) cross-link. A Glycyl lysine isopeptide (Lys-Gly) (interchain with G-Cter in SUMO2); alternate cross-link involves residue K250. A Glycyl lysine isopeptide (Lys-Gly) (interchain with G-Cter in SUMO); alternate cross-link involves residue K250. Residues S253 and S260 each carry the phosphoserine modification. Acidic residues predominate over residues 255-276 (GGADDSAEEGDLLDDDDNEDRG). The segment covering 277–287 (DDQLELIKDDE) has biased composition (basic and acidic residues). The span at 288–306 (KEAEEGEDDRDSANGEDDS) shows a compositional bias: acidic residues. S299 and S306 each carry phosphoserine.

It belongs to the RRM HNRPC family. RALY subfamily. In terms of assembly, tetramer composed of 3 copies of isoform C1 and 1 copy of isoform C2. Assembly of 3 tetramers with bound pre-mRNA gives rise to a 19S complex that interacts with HNRNPA2B1 tetramers. Component of the 40S hnRNP particle. Identified in the spliceosome C complex. Interacts with IGF2BP1. Interacts with DHX9; this interaction is direct, enhanced probably by their concomitant binding to RNA and mediates the attachment to actin filaments. Interacts with PPIA/CYPA. Interacts with YWHAE. In terms of processing, phosphorylated on Ser-260 and Ser-299 in resting cells. Phosphorylated on Ser-253 and on 1 serine residue in the poly-Ser stretch at position 238 in response to hydrogen peroxide. Post-translationally, sumoylated. Sumoylation reduces affinity for mRNA. Ubiquitinated and degraded after nucleo-cytoplasmic transport by YWHAE.

It is found in the nucleus. Its function is as follows. Binds pre-mRNA and nucleates the assembly of 40S hnRNP particles. Interacts with poly-U tracts in the 3'-UTR or 5'-UTR of mRNA and modulates the stability and the level of translation of bound mRNA molecules. Single HNRNPC tetramers bind 230-240 nucleotides. Trimers of HNRNPC tetramers bind 700 nucleotides. May play a role in the early steps of spliceosome assembly and pre-mRNA splicing. N6-methyladenosine (m6A) has been shown to alter the local structure in mRNAs and long non-coding RNAs (lncRNAs) via a mechanism named 'm(6)A-switch', facilitating binding of HNRNPC, leading to regulation of mRNA splicing. In Homo sapiens (Human), this protein is Heterogeneous nuclear ribonucleoproteins C1/C2 (HNRNPC).